Consider the following 274-residue polypeptide: MSVQSAIKRKTAPDIRARKGGDPIVMLTSYHAHTASLVDRYCDVILVGDSLGNVMHGFETTVPVTLEMMILQGHAVMRGSQHALVVVDMPFGSYEASKEQAFHSAARILKETQCGAVKLEGGVRMAETIAFLTERGIPVMGHIGLTPQSINTLGSFRAQGREEGSWEPIEADARAVSDAGAFSVVVEAVAEPLGRKITETIAIPTIGIGASAACDGQVLVLEDMLGLSPRAPKFVKRYGELGPGIEAAIKGFAEEVRSRAFPGPEHVYGMKTKS.

The Mg(2+) site is built by Asp-49 and Asp-88. 3-methyl-2-oxobutanoate contacts are provided by residues 49-50 (DS), Asp-88, and Lys-118. Glu-120 lines the Mg(2+) pocket. Residue Glu-187 is the Proton acceptor of the active site.

It belongs to the PanB family. Homodecamer; pentamer of dimers. It depends on Mg(2+) as a cofactor.

It is found in the cytoplasm. The catalysed reaction is 3-methyl-2-oxobutanoate + (6R)-5,10-methylene-5,6,7,8-tetrahydrofolate + H2O = 2-dehydropantoate + (6S)-5,6,7,8-tetrahydrofolate. Its pathway is cofactor biosynthesis; (R)-pantothenate biosynthesis; (R)-pantoate from 3-methyl-2-oxobutanoate: step 1/2. Catalyzes the reversible reaction in which hydroxymethyl group from 5,10-methylenetetrahydrofolate is transferred onto alpha-ketoisovalerate to form ketopantoate. In Rhodopseudomonas palustris (strain BisB5), this protein is 3-methyl-2-oxobutanoate hydroxymethyltransferase.